A 345-amino-acid polypeptide reads, in one-letter code: NADH-quinone oxidoreductase subunit H 1 (345 aa).

The next 9 membrane-spanning stretches (helical) occupy residues 11–31 (IILT…ISLL), 50–70 (PNVV…KYIF), 84–104 (FFLA…VIPF), 115–135 (VAIL…IMGG), 161–181 (LGLI…SHIV), 187–207 (AFGL…LFFI), 248–268 (YIAI…GWLS), 277–297 (VFWM…VKAI), and 309–329 (IGWK…AFLA).

It belongs to the complex I subunit 1 family. NDH-1 is composed of 14 different subunits. Subunits NuoA, H, J, K, L, M, N constitute the membrane sector of the complex.

The protein resides in the cell inner membrane. It carries out the reaction a quinone + NADH + 5 H(+)(in) = a quinol + NAD(+) + 4 H(+)(out). NDH-1 shuttles electrons from NADH, via FMN and iron-sulfur (Fe-S) centers, to quinones in the respiratory chain. The immediate electron acceptor for the enzyme in this species is believed to be ubiquinone. Couples the redox reaction to proton translocation (for every two electrons transferred, four hydrogen ions are translocated across the cytoplasmic membrane), and thus conserves the redox energy in a proton gradient. This subunit may bind ubiquinone. The chain is NADH-quinone oxidoreductase subunit H 1 from Cereibacter sphaeroides (strain ATCC 17023 / DSM 158 / JCM 6121 / CCUG 31486 / LMG 2827 / NBRC 12203 / NCIMB 8253 / ATH 2.4.1.) (Rhodobacter sphaeroides).